A 189-amino-acid polypeptide reads, in one-letter code: MKVIIGLGNPGKKYEDTRHNAGFMAIDKISDKWGIPVTQNKFRALVGEGRIEGEKVLLVKPQTYMNLSGESVAEVLKFYKLIPDDLVVIYDDLDLPTGHLRLREKGSAGGHNGIKSMIQHLGTQEFKRIKVGISRPEPGRSVSDYVLNTFPVAERADIQEAVSLAADACAMWTRESFLKVMNHFNSLKK.

Y14 serves as a coordination point for tRNA. H19 functions as the Proton acceptor in the catalytic mechanism. 3 residues coordinate tRNA: Y64, N66, and N112.

Belongs to the PTH family. In terms of assembly, monomer.

It localises to the cytoplasm. The enzyme catalyses an N-acyl-L-alpha-aminoacyl-tRNA + H2O = an N-acyl-L-amino acid + a tRNA + H(+). Hydrolyzes ribosome-free peptidyl-tRNAs (with 1 or more amino acids incorporated), which drop off the ribosome during protein synthesis, or as a result of ribosome stalling. Its function is as follows. Catalyzes the release of premature peptidyl moieties from peptidyl-tRNA molecules trapped in stalled 50S ribosomal subunits, and thus maintains levels of free tRNAs and 50S ribosomes. This chain is Peptidyl-tRNA hydrolase, found in Brevibacillus brevis (strain 47 / JCM 6285 / NBRC 100599).